Reading from the N-terminus, the 235-residue chain is (5-formylfuran-3-yl)methyl phosphate synthase (235 aa).

Lys27 serves as the catalytic Schiff-base intermediate with substrate. The active-site Proton acceptor is Lys85.

It belongs to the MfnB family. Homohexamer. Trimer of dimers.

The enzyme catalyses 2 D-glyceraldehyde 3-phosphate = 4-(hydroxymethyl)-2-furancarboxaldehyde phosphate + phosphate + 2 H2O. The protein operates within cofactor biosynthesis; methanofuran biosynthesis. Its function is as follows. Catalyzes the formation of 4-(hydroxymethyl)-2-furancarboxaldehyde phosphate (4-HFC-P) from two molecules of glyceraldehyde-3-P (GA-3-P). This Methanocaldococcus jannaschii (strain ATCC 43067 / DSM 2661 / JAL-1 / JCM 10045 / NBRC 100440) (Methanococcus jannaschii) protein is (5-formylfuran-3-yl)methyl phosphate synthase.